Reading from the N-terminus, the 418-residue chain is Glutamyl-tRNA reductase (418 aa).

Substrate contacts are provided by residues 51-54, Ser107, 112-114, and Gln118; these read TCNR and EPQ. Cys52 acts as the Nucleophile in catalysis. 187-192 contacts NADP(+); sequence GAGETA.

Belongs to the glutamyl-tRNA reductase family. As to quaternary structure, homodimer.

It catalyses the reaction (S)-4-amino-5-oxopentanoate + tRNA(Glu) + NADP(+) = L-glutamyl-tRNA(Glu) + NADPH + H(+). Its pathway is porphyrin-containing compound metabolism; protoporphyrin-IX biosynthesis; 5-aminolevulinate from L-glutamyl-tRNA(Glu): step 1/2. Functionally, catalyzes the NADPH-dependent reduction of glutamyl-tRNA(Glu) to glutamate 1-semialdehyde (GSA). This chain is Glutamyl-tRNA reductase, found in Dichelobacter nodosus (strain VCS1703A).